The primary structure comprises 872 residues: DNA mismatch repair protein MutS (872 aa).

602–609 (GPNMSGKS) serves as a coordination point for ATP.

The protein belongs to the DNA mismatch repair MutS family.

In terms of biological role, this protein is involved in the repair of mismatches in DNA. It is possible that it carries out the mismatch recognition step. This protein has a weak ATPase activity. This is DNA mismatch repair protein MutS from Staphylococcus aureus (strain Mu3 / ATCC 700698).